The chain runs to 241 residues: Translation initiation factor IF-3 (241 aa).

Residues 178-241 (KKTEAMAEAR…EAPAEASTEA (64 aa)) are disordered. A compositionally biased stretch (basic and acidic residues) spans 180-197 (TEAMAEAREAQAARKAEA). The span at 208–229 (ADEDIPEGELPEGEVPEAETTE) shows a compositional bias: acidic residues. The span at 230–241 (AAEAPAEASTEA) shows a compositional bias: low complexity.

The protein belongs to the IF-3 family. In terms of assembly, monomer.

The protein localises to the cytoplasm. IF-3 binds to the 30S ribosomal subunit and shifts the equilibrium between 70S ribosomes and their 50S and 30S subunits in favor of the free subunits, thus enhancing the availability of 30S subunits on which protein synthesis initiation begins. This is Translation initiation factor IF-3 from Streptomyces avermitilis (strain ATCC 31267 / DSM 46492 / JCM 5070 / NBRC 14893 / NCIMB 12804 / NRRL 8165 / MA-4680).